The sequence spans 181 residues: Large ribosomal subunit protein uL5 (181 aa).

The protein belongs to the universal ribosomal protein uL5 family. In terms of assembly, part of the 50S ribosomal subunit; part of the 5S rRNA/L5/L18/L25 subcomplex. Contacts the 5S rRNA and the P site tRNA. Forms a bridge to the 30S subunit in the 70S ribosome.

In terms of biological role, this is one of the proteins that bind and probably mediate the attachment of the 5S RNA into the large ribosomal subunit, where it forms part of the central protuberance. In the 70S ribosome it contacts protein S13 of the 30S subunit (bridge B1b), connecting the 2 subunits; this bridge is implicated in subunit movement. Contacts the P site tRNA; the 5S rRNA and some of its associated proteins might help stabilize positioning of ribosome-bound tRNAs. The protein is Large ribosomal subunit protein uL5 of Clostridium kluyveri (strain NBRC 12016).